The primary structure comprises 370 residues: MATHKLLLLPGDGIGPEVMGEVKRLIDWLNSAGIAKFETDTGLVGGSAYDAHKVSISEGDMAKALAADAIIFGAVGGPKWDAVPYEVRPEAGLLRLRKDLGLFANLRPAVCYPALADASSLKREAVEGLDIMIVRELTGGVYFGEPKTITDLGNGQKRAIDTQVYDTYEIERIARVAFDLAKKRKNKVTSMEKRNVMKSGVLWNEVVTQVHKREYPDVTLEHQLADSGGMMLVKWPKQFDVIVTDNLFGDMLSDIAAMLTGSLGMLPSASLGEVDVKSKKRKALYEPVHGSAPDIAGKGLANPIAMISSFGMALRYSFDMGALADKVDAAIAAVLASGLRTADIKSEGTTAASTTQMGEAILKELQKLHA.

Residue glycine 77–glutamate 90 participates in NAD(+) binding. Substrate-binding residues include arginine 97, arginine 107, arginine 135, and aspartate 226. Mg(2+) is bound by residues aspartate 226, aspartate 250, and aspartate 254. Glycine 290–asparagine 302 contributes to the NAD(+) binding site.

It belongs to the isocitrate and isopropylmalate dehydrogenases family. LeuB type 1 subfamily. Homodimer. Requires Mg(2+) as cofactor. It depends on Mn(2+) as a cofactor.

The protein resides in the cytoplasm. It carries out the reaction (2R,3S)-3-isopropylmalate + NAD(+) = 4-methyl-2-oxopentanoate + CO2 + NADH. It functions in the pathway amino-acid biosynthesis; L-leucine biosynthesis; L-leucine from 3-methyl-2-oxobutanoate: step 3/4. Catalyzes the oxidation of 3-carboxy-2-hydroxy-4-methylpentanoate (3-isopropylmalate) to 3-carboxy-4-methyl-2-oxopentanoate. The product decarboxylates to 4-methyl-2 oxopentanoate. This chain is 3-isopropylmalate dehydrogenase 2, found in Bradyrhizobium diazoefficiens (strain JCM 10833 / BCRC 13528 / IAM 13628 / NBRC 14792 / USDA 110).